A 118-amino-acid polypeptide reads, in one-letter code: Small ribosomal subunit protein uS13 (118 aa).

A disordered region spans residues 94–118 (SLPLRGQRTKTNARTRKGPRKPIKR).

The protein belongs to the universal ribosomal protein uS13 family. As to quaternary structure, part of the 30S ribosomal subunit. Forms a loose heterodimer with protein S19. Forms two bridges to the 50S subunit in the 70S ribosome.

Its function is as follows. Located at the top of the head of the 30S subunit, it contacts several helices of the 16S rRNA. In the 70S ribosome it contacts the 23S rRNA (bridge B1a) and protein L5 of the 50S subunit (bridge B1b), connecting the 2 subunits; these bridges are implicated in subunit movement. Contacts the tRNAs in the A and P-sites. This is Small ribosomal subunit protein uS13 from Photobacterium profundum (strain SS9).